Here is a 303-residue protein sequence, read N- to C-terminus: Glutamate formimidoyltransferase (303 aa).

Catalysis depends on histidine 81, which acts as the For formimidoyltransferase activity. 164-172 (GPSVVGKAG) is a binding site for folate.

The protein belongs to the formiminotransferase family.

The protein localises to the cytoplasm. The catalysed reaction is (6S)-5-formyl-5,6,7,8-tetrahydrofolate + L-glutamate = N-formyl-L-glutamate + (6S)-5,6,7,8-tetrahydrofolate + H(+). It carries out the reaction 5-formimidoyltetrahydrofolate + L-glutamate = N-formimidoyl-L-glutamate + (6S)-5,6,7,8-tetrahydrofolate. It catalyses the reaction (6S)-5-formyl-5,6,7,8-tetrahydrofolate + ATP = (6R)-5,10-methenyltetrahydrofolate + ADP + phosphate. It functions in the pathway amino-acid degradation; L-histidine degradation into L-glutamate; L-glutamate from N-formimidoyl-L-glutamate (transferase route): step 1/1. It participates in one-carbon metabolism; tetrahydrofolate interconversion. Functionally, catalyzes the transfer of the formyl group from N-formylglutamate to tetrahydrofolate (THF) to yield 5-formyltetrahydrofolate (5-CHO-THF) and glutamate (Glu). The triglutamate form of 5-CHO-THF (5-CHO-THF-Glu3) can also be used as substrate. It can also catalyze the transfer of the formimino group from N-formiminoglutamate to tetrahydrofolate (THF) to yield 5-formiminotetrahydrofolate (5-NH=CH-THF) and glutamate (Glu). It can replace YgfA to catalyze the irreversible ATP-dependent transformation of 5-CHO-THF to form 5,10-methenyltetrahydrofolate (5,10-CH=THF). The polypeptide is Glutamate formimidoyltransferase (Thermoplasma acidophilum (strain ATCC 25905 / DSM 1728 / JCM 9062 / NBRC 15155 / AMRC-C165)).